Consider the following 210-residue polypeptide: Orotate phosphoribosyltransferase (210 aa).

Residues Arg97, Lys98, and 125–133 (NDMVSSGKS) each bind 5-phospho-alpha-D-ribose 1-diphosphate. Positions 129 and 157 each coordinate orotate.

This sequence belongs to the purine/pyrimidine phosphoribosyltransferase family. PyrE subfamily. In terms of assembly, homodimer. The cofactor is Mg(2+).

The enzyme catalyses orotidine 5'-phosphate + diphosphate = orotate + 5-phospho-alpha-D-ribose 1-diphosphate. It functions in the pathway pyrimidine metabolism; UMP biosynthesis via de novo pathway; UMP from orotate: step 1/2. Catalyzes the transfer of a ribosyl phosphate group from 5-phosphoribose 1-diphosphate to orotate, leading to the formation of orotidine monophosphate (OMP). This is Orotate phosphoribosyltransferase from Chlamydia pneumoniae (Chlamydophila pneumoniae).